Consider the following 64-residue polypeptide: Drosocin antimicrobial peptides (64 aa).

An N-terminal signal peptide occupies residues 1–19 (MKFTIVFLLLACVFAMAVA). The propeptide occupies 20–21 (TP). A glycan (O-linked (GalNAc...) serine) is linked at Ser-28. O-linked (GalNAc...) threonine glycosylation is present at Thr-32. The segment at 32–40 (TSHPRPIRV) is critical for inhibition of translation, possibly due to its role in mediating interactions with bacterial 23S rRNA and peptide chain release factors.

It belongs to the drosocin family. Associates with the bacterial 50S ribosomal complex, occupying the nascent peptide exit tunnel. Interacts with bacterial 23S rRNA; this interaction is direct. Interacts with bacterial rplV/50S ribosomal protein L22; this interaction is direct. Interacts with bacterial prfA/peptide chain release factor RF1; while associated with the bacterial 50S ribosomal complex, this interaction is direct and traps RF1 on the ribosome, inhibiting further translation. Post-translationally, proteolytically cleaved at a pair of basic residues corresponding to the RXK/RR optimal cleavage site for furin proteases to produce two distinct antibacterial peptides. O-glycosylated. O-glycosylation may be required for efficient uptake by target bacterial cells. Monosaccharide modification of Thr-32 provides better antibacterial activity than disaccharide modification or no modification. O-glycosylation of Thr-32 is not essential for antimicrobial activity but enhances this activity by mediating interactions with the 23S rRNA and increasing the efficiency of translation inhibition.

It is found in the secreted. Antibacterial peptide with strong anti-Gram-negative bacteria activity. Significantly contributes to antibacterial activity against Enterobacter cloacae but not Providencia burhodogranariea. Inhibitor of bacterial translation machinery that targets translation termination in a prfA- or prfB-dependent manner. Binds within the nascent peptide exit tunnel of the bacterial large ribosomal subunit, potentially interfering with nascent chain translocation that occurs post-peptide bond formation. Binds prfA/RF1 (and potentially prfB/RF2), trapping it on the ribosome after release of the nascent polypeptide chain and preventing further translation. The resulting depletion of peptide chain release factors further disrupts bacterial translation by preventing ribosomal peptide chain release and inducing stop codon readthrough. Entry into target Escherichia coli cells requires the bacterial peptide antibiotic transporter sbmA. In terms of biological role, peptide with significant antibacterial activity against Providencia burhodogranariea but not Enterobacter cloacae. The polypeptide is Drosocin antimicrobial peptides (Dro) (Drosophila simulans (Fruit fly)).